Here is a 439-residue protein sequence, read N- to C-terminus: Agmatine coumaroyltransferase-1 (439 aa).

Residues histidine 152 and aspartate 385 each act as proton acceptor in the active site.

This sequence belongs to the plant acyltransferase family. Monomer.

It catalyses the reaction 4-coumaroyl-CoA + agmatine = N-(4-guanidinobutyl)-4-hydroxycinnamamide + CoA + H(+). With respect to regulation, inhibited by DEPC. Completely inhibited by ZnSO(4), strongly inhibited by CuSO(4), partially inhibited by MnCl(2). Unaffected by MgCl(2) or CaCl(2). Functionally, involved in the synthesis of hordatines (antifungal hydroxycinnamoylagmatine derivatives). Specific for agmatine as the acyl acceptor, inactive towards tyramine and putrescine. Has activity with the acyl donors 4-coumaroyl-CoA, cinnamoyl-CoA, caffeoyl-CoA, feruloyl-CoA, and to a lesser extent sinapoyl-CoA. In Hordeum vulgare (Barley), this protein is Agmatine coumaroyltransferase-1 (ACT-1).